We begin with the raw amino-acid sequence, 243 residues long: MPFTFKQFHVDDSHCGMPVSTDGVLLGAWAPLTQAKTILDIGAGSGLLSLMAAQRSEAVIQALEIDPLAAQDCQHNIDQSPWSDRITLIQADLLQWYPLAQTQAQTQFDHILCNPPYFDNGPQSQCSKRAQARHTDSLAFDQLLSAIKQLLAPTGKASLILPNASLGRFLPLLAEFKLKLSARVDITTAPNKAPQRHLLCLSHAVSSAESSEAIEAEHLSIRDASGAYSQAMVALTQAFYLKL.

Belongs to the methyltransferase superfamily. tRNA (adenine-N(6)-)-methyltransferase family.

The protein resides in the cytoplasm. It catalyses the reaction adenosine(37) in tRNA1(Val) + S-adenosyl-L-methionine = N(6)-methyladenosine(37) in tRNA1(Val) + S-adenosyl-L-homocysteine + H(+). Specifically methylates the adenine in position 37 of tRNA(1)(Val) (anticodon cmo5UAC). This Shewanella loihica (strain ATCC BAA-1088 / PV-4) protein is tRNA1(Val) (adenine(37)-N6)-methyltransferase.